Here is a 184-residue protein sequence, read N- to C-terminus: Bifunctional protein PyrR (184 aa).

The short motif at valine 98–threonine 110 is the PRPP-binding element.

This sequence belongs to the purine/pyrimidine phosphoribosyltransferase family. PyrR subfamily.

The catalysed reaction is UMP + diphosphate = 5-phospho-alpha-D-ribose 1-diphosphate + uracil. Its function is as follows. Regulates the transcription of the pyrimidine nucleotide (pyr) operon in response to exogenous pyrimidines. Also displays a weak uracil phosphoribosyltransferase activity which is not physiologically significant. The polypeptide is Bifunctional protein PyrR (Roseiflexus castenholzii (strain DSM 13941 / HLO8)).